Consider the following 71-residue polypeptide: Exodeoxyribonuclease 7 small subunit (71 aa).

Belongs to the XseB family. As to quaternary structure, heterooligomer composed of large and small subunits.

The protein resides in the cytoplasm. It catalyses the reaction Exonucleolytic cleavage in either 5'- to 3'- or 3'- to 5'-direction to yield nucleoside 5'-phosphates.. Its function is as follows. Bidirectionally degrades single-stranded DNA into large acid-insoluble oligonucleotides, which are then degraded further into small acid-soluble oligonucleotides. In Clostridium botulinum (strain Kyoto / Type A2), this protein is Exodeoxyribonuclease 7 small subunit.